A 440-amino-acid polypeptide reads, in one-letter code: Chromosome partition protein MukF (440 aa).

Residues 208 to 236 are leucine-zipper; sequence LSETSGTLRELQDTLEAAGDKLQANLLRI.

It belongs to the MukF family. In terms of assembly, interacts, and probably forms a ternary complex, with MukE and MukB via its C-terminal region. The complex formation is stimulated by calcium or magnesium. It is required for an interaction between MukE and MukB.

The protein resides in the cytoplasm. It localises to the nucleoid. Functionally, involved in chromosome condensation, segregation and cell cycle progression. May participate in facilitating chromosome segregation by condensation DNA from both sides of a centrally located replisome during cell division. Not required for mini-F plasmid partitioning. Probably acts via its interaction with MukB and MukE. Overexpression results in anucleate cells. It has a calcium binding activity. In Escherichia coli O17:K52:H18 (strain UMN026 / ExPEC), this protein is Chromosome partition protein MukF.